We begin with the raw amino-acid sequence, 145 residues long: Inner membrane protein YiaA (145 aa).

Over 1–12 (MDNKISTYSPAF) the chain is Cytoplasmic. A helical membrane pass occupies residues 13–32 (SIVSWIALVGGIVTYLLGLW). Residues 33-41 (NAEMQLNEK) are Periplasmic-facing. The chain crosses the membrane as a helical span at residues 42-59 (GYYFAVLVLGLFSAASYQ). The Cytoplasmic portion of the chain corresponds to 60–71 (KTVRDKYEGIPT). Residues 72 to 94 (TSIYYMTCLTVFIISVALLMVGL) form a helical membrane-spanning segment. The Periplasmic segment spans residues 95-98 (WNAT). Residues 99–121 (LLLSEKGFYGLAFFLSLFGAVAV) traverse the membrane as a helical segment. The Cytoplasmic segment spans residues 122–145 (QKNIRDAGINPPKETQVTQEEYSE).

The protein resides in the cell inner membrane. In Escherichia coli (strain K12), this protein is Inner membrane protein YiaA (yiaA).